The chain runs to 172 residues: R-phycocyanin-2 beta chain (172 aa).

Position 72 is an N4-methylasparagine (asparagine 72). A (2R,3E)-phycocyanobilin-binding site is contributed by cysteine 82. A (2R,3E)-phycoerythrobilin-binding site is contributed by cysteine 153.

It belongs to the phycobiliprotein family. Heterodimer of an alpha and a beta chain. Contains two covalently linked bilin chromophores.

The protein resides in the cellular thylakoid membrane. Its function is as follows. Light-harvesting photosynthetic bile pigment-protein from the phycobiliprotein complex. In Synechococcus sp. (strain WH8103), this protein is R-phycocyanin-2 beta chain (rpcB).